Here is a 280-residue protein sequence, read N- to C-terminus: Putative aquaporin-10 (280 aa).

Topologically, residues M1–Y8 are cytoplasmic. A helical transmembrane segment spans residues Y9 to A29. Topologically, residues R30–G64 are extracellular. A helical transmembrane segment spans residues I65–A85. Residues G86–F114 lie on the Cytoplasmic side of the membrane. The chain crosses the membrane as a helical span at residues L115–I135. Residues W136–G164 are Extracellular-facing. Residues I165 to L185 traverse the membrane as a helical segment. Over A186–L193 the chain is Cytoplasmic. Residues I194 to L214 form a helical membrane-spanning segment. Topologically, residues N215 to S233 are extracellular. A helical transmembrane segment spans residues F234–G254. Residues Q255–D280 are Cytoplasmic-facing. Positions K256 to D280 are disordered. Residues S262–D280 are compositionally biased toward basic and acidic residues.

The protein belongs to the MIP/aquaporin (TC 1.A.8) family.

It is found in the membrane. The sequence is that of Putative aquaporin-10 (aqp-10) from Caenorhabditis elegans.